A 186-amino-acid polypeptide reads, in one-letter code: uncharacterized protein (186 aa).

Disordered stretches follow at residues 17 to 47 (LSGE…EETF), 77 to 105 (EDKL…AAEA), and 121 to 164 (QQAA…PVAG). Residues 90–105 (PLAARPPSQAAAAAEA) show a composition bias toward low complexity. Positions 136–149 (PEPDPEPADEAAEE) are enriched in acidic residues.

This is an uncharacterized protein from Homo sapiens (Human).